Here is a 964-residue protein sequence, read N- to C-terminus: uncharacterized protein (964 aa).

Disordered regions lie at residues 1–31 (MDSE…SDCE) and 169–199 (EETY…DEIS). Residues 10 to 27 (HSICNSVSSGENYKSPES) are compositionally biased toward polar residues. The stretch at 656-840 (EVMESLQVEI…LILNQTSMAK (185 aa)) forms a coiled coil.

This is an uncharacterized protein from Caenorhabditis elegans.